Here is a 297-residue protein sequence, read N- to C-terminus: Large ribosomal subunit protein uL18 (297 aa).

K164 is covalently cross-linked (Glycyl lysine isopeptide (Lys-Gly) (interchain with G-Cter in ubiquitin)). 3 positions are modified to phosphoserine: S167, S176, and S235.

This sequence belongs to the universal ribosomal protein uL18 family. Component of the large ribosomal subunit (LSU). Mature yeast ribosomes consist of a small (40S) and a large (60S) subunit. The 40S small subunit contains 1 molecule of ribosomal RNA (18S rRNA) and 33 different proteins (encoded by 57 genes). The large 60S subunit contains 3 rRNA molecules (25S, 5.8S and 5S rRNA) and 46 different proteins (encoded by 81 genes). Component of a hexameric 5S RNP precursor complex, composed of 5S RNA, RRS1, RPF2, RPL5, RPL11A/RPL11B and SYO1; this complex acts as a precursor for ribosome assembly. RPL5/uL18 forms a heterotrimeric complex with SYO1 and RPL11A/RPL11B/uL5. Interaction of this complex with KAP104 allows the nuclear import of the heterotrimer.

It is found in the cytoplasm. The protein resides in the nucleus. In terms of biological role, component of the ribosome, a large ribonucleoprotein complex responsible for the synthesis of proteins in the cell. The small ribosomal subunit (SSU) binds messenger RNAs (mRNAs) and translates the encoded message by selecting cognate aminoacyl-transfer RNA (tRNA) molecules. The large subunit (LSU) contains the ribosomal catalytic site termed the peptidyl transferase center (PTC), which catalyzes the formation of peptide bonds, thereby polymerizing the amino acids delivered by tRNAs into a polypeptide chain. The nascent polypeptides leave the ribosome through a tunnel in the LSU and interact with protein factors that function in enzymatic processing, targeting, and the membrane insertion of nascent chains at the exit of the ribosomal tunnel. The polypeptide is Large ribosomal subunit protein uL18 (Saccharomyces cerevisiae (strain ATCC 204508 / S288c) (Baker's yeast)).